The following is a 391-amino-acid chain: GTPase HflX (391 aa).

A disordered region spans residues 162–181; that stretch reads LAQQRGGAKGTRGASRGAGE. The region spanning 222–391 is the Hflx-type G domain; the sequence is KIGAIVGYTN…KITDIIIFDK (170 aa). GTP contacts are provided by residues 228–235, 253–257, 278–281, 344–347, and 369–371; these read GYTNAGKS, FATLD, DTVG, NKMD, and SVT. Residues S235 and T255 each contribute to the Mg(2+) site.

Belongs to the TRAFAC class OBG-HflX-like GTPase superfamily. HflX GTPase family. As to quaternary structure, monomer. Associates with the 50S ribosomal subunit. Requires Mg(2+) as cofactor.

The protein localises to the cytoplasm. Functionally, GTPase that associates with the 50S ribosomal subunit and may have a role during protein synthesis or ribosome biogenesis. This is GTPase HflX from Treponema denticola (strain ATCC 35405 / DSM 14222 / CIP 103919 / JCM 8153 / KCTC 15104).